Here is a 113-residue protein sequence, read N- to C-terminus: Tyrosine-protein phosphatase 15 (113 aa).

Residues 1–113 form the Tyrosine-protein phosphatase domain; that stretch reads WRMVYDNNVN…RSTGDGVALI (113 aa).

It belongs to the protein-tyrosine phosphatase family.

The enzyme catalyses O-phospho-L-tyrosyl-[protein] + H2O = L-tyrosyl-[protein] + phosphate. In Styela plicata (Wrinkled sea squirt), this protein is Tyrosine-protein phosphatase 15 (STY-15).